The sequence spans 134 residues: Isocitrate dehydrogenase [NAD] subunit alpha, mitochondrial (134 aa).

An N6-succinyllysine modification is found at K37. Position 50 is a phosphothreonine (T50). 3 residues coordinate substrate: R64, R74, and R95.

Belongs to the isocitrate and isopropylmalate dehydrogenases family. As to quaternary structure, heterooligomer of subunits alpha (IDH3A), beta (IDH3B), and gamma (IDH3G) in the apparent ratio of 2:1:1. The heterodimer containing one IDH3A and one IDH3B subunit and the heterodimer containing one IDH3A and one IDH3G subunit assemble into a heterotetramer (which contains two subunits of IDH3A, one of IDH3B and one of IDH3G) and further into the heterooctamer. Requires Mg(2+) as cofactor. The cofactor is Mn(2+).

Its subcellular location is the mitochondrion. The catalysed reaction is D-threo-isocitrate + NAD(+) = 2-oxoglutarate + CO2 + NADH. Its activity is regulated as follows. The heterotetramer and the heterodimer composed of IDH3A and IDH3G subunits can be allosterically activated by citrate (CIT) or/and ADP, and the two activators can act independently or synergistically. The heterodimer composed of IDH3A and IDH3B subunits cannot be allosterically regulated and the allosteric regulation of the heterotetramer is through the IDH3G subunit and not the IDH3B subunit. The IDH3G subunit contains the allosteric site which consists of a CIT-binding site and an ADP-binding site, and the binding of CIT and ADP causes conformational changes at the allosteric site which are transmitted to the active site in the catalytic subunit (IDH3A) through a cascade of conformational changes at the heterodimer interface, leading to stabilization of the isocitrate-binding at the active site and thus activation of the enzyme. ATP can activate the heterotetramer and the heterodimer composed of IDH3A and IDH3G subunits at low concentrations but inhibits their activities at high concentrations, whereas ATP exhibits only inhibitory effect on the heterodimer composed of IDH3A and IDH3B subunits. Functionally, catalytic subunit of the enzyme which catalyzes the decarboxylation of isocitrate (ICT) into alpha-ketoglutarate. The heterodimer composed of the alpha (IDH3A) and beta (IDH3B) subunits and the heterodimer composed of the alpha (IDH3A) and gamma (IDH3G) subunits, have considerable basal activity but the full activity of the heterotetramer (containing two subunits of IDH3A, one of IDH3B and one of IDH3G) requires the assembly and cooperative function of both heterodimers. This Mesocricetus auratus (Golden hamster) protein is Isocitrate dehydrogenase [NAD] subunit alpha, mitochondrial.